Here is a 580-residue protein sequence, read N- to C-terminus: Aspartate--tRNA ligase (580 aa).

Residue Glu173 participates in L-aspartate binding. The aspartate stretch occupies residues 195 to 198; sequence QIYK. Position 217 (Arg217) interacts with L-aspartate. Residues 217-219 and Gln226 each bind ATP; that span reads RDE. Residue His443 coordinates L-aspartate. Glu477 provides a ligand contact to ATP. Arg484 serves as a coordination point for L-aspartate. 529–532 contacts ATP; sequence GIER.

Belongs to the class-II aminoacyl-tRNA synthetase family. Type 1 subfamily. As to quaternary structure, homodimer.

It is found in the cytoplasm. The catalysed reaction is tRNA(Asp) + L-aspartate + ATP = L-aspartyl-tRNA(Asp) + AMP + diphosphate. In terms of biological role, catalyzes the attachment of L-aspartate to tRNA(Asp) in a two-step reaction: L-aspartate is first activated by ATP to form Asp-AMP and then transferred to the acceptor end of tRNA(Asp). This chain is Aspartate--tRNA ligase, found in Malacoplasma penetrans (strain HF-2) (Mycoplasma penetrans).